A 281-amino-acid chain; its full sequence is Pantothenate synthetase (281 aa).

ATP is bound at residue 30-37 (MGALHRGH). Catalysis depends on H37, which acts as the Proton donor. Residue Q61 participates in (R)-pantoate binding. Q61 lines the beta-alanine pocket. An ATP-binding site is contributed by 147 to 150 (GEKD). Q153 provides a ligand contact to (R)-pantoate. ATP is bound by residues I176 and 184 to 187 (LSSR).

It belongs to the pantothenate synthetase family. In terms of assembly, homodimer.

It is found in the cytoplasm. The catalysed reaction is (R)-pantoate + beta-alanine + ATP = (R)-pantothenate + AMP + diphosphate + H(+). The protein operates within cofactor biosynthesis; (R)-pantothenate biosynthesis; (R)-pantothenate from (R)-pantoate and beta-alanine: step 1/1. Functionally, catalyzes the condensation of pantoate with beta-alanine in an ATP-dependent reaction via a pantoyl-adenylate intermediate. The chain is Pantothenate synthetase from Porphyromonas gingivalis (strain ATCC BAA-308 / W83).